The primary structure comprises 97 residues: uncharacterized protein (97 aa).

This is an uncharacterized protein from Orgyia pseudotsugata multicapsid polyhedrosis virus (OpMNPV).